Reading from the N-terminus, the 275-residue chain is Nitrogenase iron protein 1 (275 aa).

An ATP-binding site is contributed by 9 to 16 (GKGGIGKS). C97 serves as a coordination point for [4Fe-4S] cluster. ADP-ribosylarginine; by dinitrogenase reductase ADP-ribosyltransferase is present on R100. C132 provides a ligand contact to [4Fe-4S] cluster.

This sequence belongs to the NifH/BchL/ChlL family. As to quaternary structure, homodimer. [4Fe-4S] cluster serves as cofactor. In terms of processing, the reversible ADP-ribosylation of Arg-100 inactivates the nitrogenase reductase and regulates nitrogenase activity.

The enzyme catalyses N2 + 8 reduced [2Fe-2S]-[ferredoxin] + 16 ATP + 16 H2O = H2 + 8 oxidized [2Fe-2S]-[ferredoxin] + 2 NH4(+) + 16 ADP + 16 phosphate + 6 H(+). Its function is as follows. The key enzymatic reactions in nitrogen fixation are catalyzed by the nitrogenase complex, which has 2 components: the iron protein and the molybdenum-iron protein. The chain is Nitrogenase iron protein 1 (nifH1) from Methanosarcina barkeri.